The primary structure comprises 467 residues: ATP synthase subunit beta (467 aa).

154 to 161 (GGAGVGKT) serves as a coordination point for ATP.

Belongs to the ATPase alpha/beta chains family. F-type ATPases have 2 components, CF(1) - the catalytic core - and CF(0) - the membrane proton channel. CF(1) has five subunits: alpha(3), beta(3), gamma(1), delta(1), epsilon(1). CF(0) has three main subunits: a(1), b(2) and c(9-12). The alpha and beta chains form an alternating ring which encloses part of the gamma chain. CF(1) is attached to CF(0) by a central stalk formed by the gamma and epsilon chains, while a peripheral stalk is formed by the delta and b chains.

It is found in the cell inner membrane. The enzyme catalyses ATP + H2O + 4 H(+)(in) = ADP + phosphate + 5 H(+)(out). In terms of biological role, produces ATP from ADP in the presence of a proton gradient across the membrane. The catalytic sites are hosted primarily by the beta subunits. This chain is ATP synthase subunit beta, found in Leptospira interrogans serogroup Icterohaemorrhagiae serovar copenhageni (strain Fiocruz L1-130).